The chain runs to 121 residues: Parathyroid hormone 4 (121 aa).

The signal sequence occupies residues 1 to 24 (MLKMQRSQQRVALMMLMVVAAVHC). The propeptide occupies 25–29 (QESES). The segment at 77–97 (RSRGAQLYSQPGREESSGGQK) is disordered.

Belongs to the parathyroid hormone family. Specifically expressed in a bilateral cluster of neurons in the dorsal region of the periventricular hypothalamus. Their axons project through the midbrain and hindbrain and down the spinal cord.

The protein localises to the secreted. Neuroendocrine peptide which is produced by a subset of neurons in the hypothalamus. Activates the G-protein coupled receptors pth1ra, pth1rb and pth2r with similar affinity. Receptor binding stimulates intracellular cAMP production. Plays a role in bone mineralization by regulating expression of factors involved in phosphate homeostasis. Important for embryonic bone development. In Danio rerio (Zebrafish), this protein is Parathyroid hormone 4.